We begin with the raw amino-acid sequence, 337 residues long: Inositol 2-dehydrogenase (337 aa).

This sequence belongs to the Gfo/Idh/MocA family. Homotetramer.

The enzyme catalyses myo-inositol + NAD(+) = scyllo-inosose + NADH + H(+). Functionally, involved in the oxidation of myo-inositol (MI) to 2-keto-myo-inositol (2KMI or 2-inosose). In Klebsiella pneumoniae subsp. pneumoniae (strain ATCC 700721 / MGH 78578), this protein is Inositol 2-dehydrogenase.